Here is a 695-residue protein sequence, read N- to C-terminus: Nucleoprotein (695 aa).

2 coiled-coil regions span residues 316–341 (VNVGEQYQQLREAAHDAEVKLQRRHE) and 372–399 (QTLAVLSQKREKLARLAAEIENNIVEDQ). A disordered region spans residues 424 to 611 (QARPMNRPTA…SPSAPQEDTR (188 aa)). Residues 438–447 (VDDKIEHEST) are compositionally biased toward basic and acidic residues. 2 stretches are compositionally biased toward polar residues: residues 495 to 505 (RQSQDLNNSQG) and 537 to 552 (TTDSQESIDQPGSDNE). Positions 603–606 (PSAP) match the PTAP/PSAP motif motif.

Belongs to the filoviruses nucleoprotein family. Homooligomer. Homomultimerizes to form the nucleocapsid. Binds to viral genomic RNA. Interacts with VP35 and VP30 to form the nucleocapsid. Also interacts with VP24 and VP40. Phosphorylated.

Its subcellular location is the virion. It is found in the host cytoplasm. Functionally, encapsidates the genome, protecting it from nucleases. The encapsidated genomic RNA is termed the nucleocapsid and serves as template for transcription and replication. During replication, encapsidation by NP is coupled to RNA synthesis and all replicative products are resistant to nucleases. The protein is Nucleoprotein (NP) of Chlorocebus aethiops (Green monkey).